A 243-amino-acid polypeptide reads, in one-letter code: Geranylgeranylglyceryl phosphate synthase (243 aa).

Mg(2+)-binding residues include D22 and S51. Sn-glycerol 1-phosphate is bound by residues 170 to 176 (YLESGSG), 201 to 202 (GG), and 223 to 224 (GT).

The protein belongs to the GGGP/HepGP synthase family. Group II subfamily. Requires Mg(2+) as cofactor.

The protein localises to the cytoplasm. It carries out the reaction sn-glycerol 1-phosphate + (2E,6E,10E)-geranylgeranyl diphosphate = sn-3-O-(geranylgeranyl)glycerol 1-phosphate + diphosphate. Its pathway is membrane lipid metabolism; glycerophospholipid metabolism. Functionally, prenyltransferase that catalyzes the transfer of the geranylgeranyl moiety of geranylgeranyl diphosphate (GGPP) to the C3 hydroxyl of sn-glycerol-1-phosphate (G1P). This reaction is the first ether-bond-formation step in the biosynthesis of archaeal membrane lipids. The chain is Geranylgeranylglyceryl phosphate synthase from Picrophilus torridus (strain ATCC 700027 / DSM 9790 / JCM 10055 / NBRC 100828 / KAW 2/3).